The sequence spans 1439 residues: Gag-Pol polyprotein (1439 aa).

G2 carries N-myristoyl glycine; by host lipidation. The interval 7–31 (ILRGEKLDAWEKIKLRPGGKKHYML) is interaction with Gp41. The segment at 8–43 (LRGEKLDAWEKIKLRPGGKKHYMLKHLVWANRELEK) is interaction with host CALM1. The interval 12-19 (KLDAWEKI) is interaction with host AP3D1. Residues 14–33 (DAWEKIKLRPGGKKHYMLKH) form an interaction with membrane phosphatidylinositol 4,5-bisphosphate and RNA region. The Nuclear export signal signature appears at 16–22 (WEKIKLR). Positions 26–32 (KKHYMLK) match the Nuclear localization signal motif. The tract at residues 73 to 77 (EELKS) is interaction with membrane phosphatidylinositol 4,5-bisphosphate. Residues 105 to 128 (EEEQNESQQKTQQAGAADRGKDSQ) are disordered. Y130 is subject to Phosphotyrosine; by host. The segment at 187–225 (NTVGGHQAAMQMLKDTINEEAAEWDRLHPVHAGPVAPGQ) is interaction with human PPIA/CYPA and NUP153. The tract at residues 275–361 (YSPVSILDIK…GGPAHKARVL (87 aa)) is dimerization/Multimerization of capsid protein p24. 2 CCHC-type zinc fingers span residues 387–404 (IKCF…NCRA) and 408–425 (KGCW…DCTE). A disordered region spans residues 441-485 (KAREFPSEQTRANSPTRESQTRANSPTTRELQVRGSNTFSEAGAE). Positions 447-480 (SEQTRANSPTRESQTRANSPTTRELQVRGSNTFS) are enriched in polar residues. The tract at residues 493 to 497 (PQITL) is dimerization of protease. One can recognise a Peptidase A2 domain in the interval 512–581 (KEALLDTGAD…TPVNIIGRNM (70 aa)). The For protease activity; shared with dimeric partner role is filled by D517. Dimerization of protease stretches follow at residues 541-547 (GIGGFIK) and 580-592 (NMLT…LNFP). Residues 635–825 (EGKISRIGPE…PPFLWMGYEL (191 aa)) form the Reverse transcriptase domain. Mg(2+) contacts are provided by D701, D776, and D777. The RT 'primer grip' stretch occupies residues 818–826 (FLWMGYELH). The Tryptophan repeat motif motif lies at 989 to 1005 (WEAWWTDYWQATWIPEW). The RNase H type-1 domain maps to 1025–1148 (IAGVETFYVD…VDKLVSSGIR (124 aa)). Mg(2+) is bound by residues D1034, E1069, D1089, and D1140. The Integrase-type zinc finger occupies 1154–1195 (DGIDKAQEEHEKYHSNWRAMANEFNIPPVVPKEIVACCDKCQ). 4 residues coordinate Zn(2+): H1163, H1167, C1191, and C1194. In terms of domain architecture, Integrase catalytic spans 1205 to 1355 (VNCSPGIWQL…SAGERIIDII (151 aa)). Residues D1215, D1267, and E1303 each contribute to the Mg(2+) site. The integrase-type DNA-binding region spans 1374-1421 (FRVYYRDSRDPIWKGPAKLLWKGEGAVVIQDNSDIKVVPRRKAKIIRD).

Homotrimer; further assembles as hexamers of trimers. Interacts with gp41 (via C-terminus). Interacts with host CALM1; this interaction induces a conformational change in the Matrix protein, triggering exposure of the myristate group. Interacts with host AP3D1; this interaction allows the polyprotein trafficking to multivesicular bodies during virus assembly. Part of the pre-integration complex (PIC) which is composed of viral genome, matrix protein, Vpr and integrase. As to quaternary structure, homodimer; the homodimer further multimerizes as homohexamers or homopentamers. Interacts with human PPIA/CYPA; This interaction stabilizes the capsid. Interacts with human NUP153. Interacts with host PDZD8; this interaction stabilizes the capsid. Interacts with monkey TRIM5; this interaction destabilizes the capsid. In terms of assembly, homodimer, whose active site consists of two apposed aspartic acid residues. Heterodimer of p66 RT and p51 RT (RT p66/p51). Heterodimerization of RT is essential for DNA polymerase activity. The overall folding of the subdomains is similar in p66 RT and p51 RT but the spatial arrangements of the subdomains are dramatically different. As to quaternary structure, homotetramer; may further associate as a homohexadecamer. Part of the pre-integration complex (PIC) which is composed of viral genome, matrix protein, Vpr and integrase. Interacts with human SMARCB1/INI1 and human PSIP1/LEDGF isoform 1. Interacts with human KPNA3; this interaction might play a role in nuclear import of the pre-integration complex. Interacts with human NUP153; this interaction might play a role in nuclear import of the pre-integration complex. Mg(2+) serves as cofactor. Specific enzymatic cleavages by the viral protease yield mature proteins. The protease is released by autocatalytic cleavage. The polyprotein is cleaved during and after budding, this process is termed maturation. Proteolytic cleavage of p66 RT removes the RNase H domain to yield the p51 RT subunit. Nucleocapsid protein p7 might be further cleaved after virus entry. Post-translationally, tyrosine phosphorylated presumably in the virion by a host kinase. Phosphorylation is apparently not a major regulator of membrane association. In terms of processing, phosphorylated possibly by host MAPK1; this phosphorylation is necessary for Pin1-mediated virion uncoating. Methylated by host PRMT6, impairing its function by reducing RNA annealing and the initiation of reverse transcription.

The protein localises to the host cell membrane. It localises to the host endosome. Its subcellular location is the host multivesicular body. It is found in the virion membrane. The protein resides in the host nucleus. The protein localises to the host cytoplasm. It localises to the virion. The enzyme catalyses Specific for a P1 residue that is hydrophobic, and P1' variable, but often Pro.. The catalysed reaction is Endohydrolysis of RNA in RNA/DNA hybrids. Three different cleavage modes: 1. sequence-specific internal cleavage of RNA. Human immunodeficiency virus type 1 and Moloney murine leukemia virus enzymes prefer to cleave the RNA strand one nucleotide away from the RNA-DNA junction. 2. RNA 5'-end directed cleavage 13-19 nucleotides from the RNA end. 3. DNA 3'-end directed cleavage 15-20 nucleotides away from the primer terminus.. It catalyses the reaction 3'-end directed exonucleolytic cleavage of viral RNA-DNA hybrid.. It carries out the reaction DNA(n) + a 2'-deoxyribonucleoside 5'-triphosphate = DNA(n+1) + diphosphate. Protease: The viral protease is inhibited by many synthetic protease inhibitors (PIs), such as amprenavir, atazanavir, indinavir, loprinavir, nelfinavir, ritonavir and saquinavir. Use of protease inhibitors in tritherapy regimens permit more ambitious therapeutic strategies. Reverse transcriptase/ribonuclease H: RT can be inhibited either by nucleoside RT inhibitors (NRTIs) or by non nucleoside RT inhibitors (NNRTIs). NRTIs act as chain terminators, whereas NNRTIs inhibit DNA polymerization by binding a small hydrophobic pocket near the RT active site and inducing an allosteric change in this region. Classical NRTIs are abacavir, adefovir (PMEA), didanosine (ddI), lamivudine (3TC), stavudine (d4T), tenofovir (PMPA), zalcitabine (ddC), and zidovudine (AZT). Classical NNRTIs are atevirdine (BHAP U-87201E), delavirdine, efavirenz (DMP-266), emivirine (I-EBU), and nevirapine (BI-RG-587). The tritherapies used as a basic effective treatment of AIDS associate two NRTIs and one NNRTI. Mediates, with Gag polyprotein, the essential events in virion assembly, including binding the plasma membrane, making the protein-protein interactions necessary to create spherical particles, recruiting the viral Env proteins, and packaging the genomic RNA via direct interactions with the RNA packaging sequence (Psi). Gag-Pol polyprotein may regulate its own translation, by the binding genomic RNA in the 5'-UTR. At low concentration, the polyprotein would promote translation, whereas at high concentration, the polyprotein would encapsidate genomic RNA and then shut off translation. Its function is as follows. Targets the polyprotein to the plasma membrane via a multipartite membrane-binding signal, that includes its myristoylated N-terminus. Matrix protein is part of the pre-integration complex. Implicated in the release from host cell mediated by Vpu. Binds to RNA. In terms of biological role, forms the conical core that encapsulates the genomic RNA-nucleocapsid complex in the virion. Most core are conical, with only 7% tubular. The core is constituted by capsid protein hexamer subunits. The core is disassembled soon after virion entry. Host restriction factors such as TRIM5-alpha or TRIMCyp bind retroviral capsids and cause premature capsid disassembly, leading to blocks in reverse transcription. Capsid restriction by TRIM5 is one of the factors which restricts HIV-1 to the human species. Host PIN1 apparently facilitates the virion uncoating. On the other hand, interactions with PDZD8 or CYPA stabilize the capsid. Functionally, encapsulates and protects viral dimeric unspliced genomic RNA (gRNA). Binds these RNAs through its zinc fingers. Acts as a nucleic acid chaperone which is involved in rearangement of nucleic acid secondary structure during gRNA retrotranscription. Also facilitates template switch leading to recombination. As part of the polyprotein, participates in gRNA dimerization, packaging, tRNA incorporation and virion assembly. Aspartyl protease that mediates proteolytic cleavages of Gag and Gag-Pol polyproteins during or shortly after the release of the virion from the plasma membrane. Cleavages take place as an ordered, step-wise cascade to yield mature proteins. This process is called maturation. Displays maximal activity during the budding process just prior to particle release from the cell. Also cleaves Nef and Vif, probably concomitantly with viral structural proteins on maturation of virus particles. Hydrolyzes host EIF4GI and PABP1 in order to shut off the capped cellular mRNA translation. The resulting inhibition of cellular protein synthesis serves to ensure maximal viral gene expression and to evade host immune response. Also mediates cleavage of host YTHDF3. Mediates cleavage of host CARD8, thereby activating the CARD8 inflammasome, leading to the clearance of latent HIV-1 in patient CD4(+) T-cells after viral reactivation; in contrast, HIV-1 can evade CARD8-sensing when its protease remains inactive in infected cells prior to viral budding. Its function is as follows. Multifunctional enzyme that converts the viral RNA genome into dsDNA in the cytoplasm, shortly after virus entry into the cell. This enzyme displays a DNA polymerase activity that can copy either DNA or RNA templates, and a ribonuclease H (RNase H) activity that cleaves the RNA strand of RNA-DNA heteroduplexes in a partially processive 3' to 5' endonucleasic mode. Conversion of viral genomic RNA into dsDNA requires many steps. A tRNA(3)-Lys binds to the primer-binding site (PBS) situated at the 5'-end of the viral RNA. RT uses the 3' end of the tRNA primer to perform a short round of RNA-dependent minus-strand DNA synthesis. The reading proceeds through the U5 region and ends after the repeated (R) region which is present at both ends of viral RNA. The portion of the RNA-DNA heteroduplex is digested by the RNase H, resulting in a ssDNA product attached to the tRNA primer. This ssDNA/tRNA hybridizes with the identical R region situated at the 3' end of viral RNA. This template exchange, known as minus-strand DNA strong stop transfer, can be either intra- or intermolecular. RT uses the 3' end of this newly synthesized short ssDNA to perform the RNA-dependent minus-strand DNA synthesis of the whole template. RNase H digests the RNA template except for two polypurine tracts (PPTs) situated at the 5'-end and near the center of the genome. It is not clear if both polymerase and RNase H activities are simultaneous. RNase H probably can proceed both in a polymerase-dependent (RNA cut into small fragments by the same RT performing DNA synthesis) and a polymerase-independent mode (cleavage of remaining RNA fragments by free RTs). Secondly, RT performs DNA-directed plus-strand DNA synthesis using the PPTs that have not been removed by RNase H as primers. PPTs and tRNA primers are then removed by RNase H. The 3' and 5' ssDNA PBS regions hybridize to form a circular dsDNA intermediate. Strand displacement synthesis by RT to the PBS and PPT ends produces a blunt ended, linear dsDNA copy of the viral genome that includes long terminal repeats (LTRs) at both ends. In terms of biological role, catalyzes viral DNA integration into the host chromosome, by performing a series of DNA cutting and joining reactions. This enzyme activity takes place after virion entry into a cell and reverse transcription of the RNA genome in dsDNA. The first step in the integration process is 3' processing. This step requires a complex comprising the viral genome, matrix protein, Vpr and integrase. This complex is called the pre-integration complex (PIC). The integrase protein removes 2 nucleotides from each 3' end of the viral DNA, leaving recessed CA OH's at the 3' ends. In the second step, the PIC enters cell nucleus. This process is mediated through integrase and Vpr proteins, and allows the virus to infect a non dividing cell. This ability to enter the nucleus is specific of lentiviruses, other retroviruses cannot and rely on cell division to access cell chromosomes. In the third step, termed strand transfer, the integrase protein joins the previously processed 3' ends to the 5' ends of strands of target cellular DNA at the site of integration. The 5'-ends are produced by integrase-catalyzed staggered cuts, 5 bp apart. A Y-shaped, gapped, recombination intermediate results, with the 5'-ends of the viral DNA strands and the 3' ends of target DNA strands remaining unjoined, flanking a gap of 5 bp. The last step is viral DNA integration into host chromosome. This involves host DNA repair synthesis in which the 5 bp gaps between the unjoined strands are filled in and then ligated. Since this process occurs at both cuts flanking the HIV genome, a 5 bp duplication of host DNA is produced at the ends of HIV-1 integration. Alternatively, Integrase may catalyze the excision of viral DNA just after strand transfer, this is termed disintegration. This is Gag-Pol polyprotein (gag-pol) from Human immunodeficiency virus type 1 group M subtype C (isolate ETH2220) (HIV-1).